The sequence spans 302 residues: Meiotic recombination protein rec14 (302 aa).

7 WD repeats span residues 14–51 (AHQA…HSLV), 57–96 (PHKL…FRDL), 101–140 (QHPS…KISE), 142–184 (DTKG…HVLS), 185–226 (GHTS…GQLR), 227–266 (GHAA…CIST), and 269–302 (ETDG…AATE).

Component of the DSB catalytic core (DSBC) complex, composed of at least rec12, rec6 and rec14. The complex interacts with mde2.

Functionally, required for formation of the rec12-mediated double-strand breaks (DSBs) that initiate meiotic recombination. The protein is Meiotic recombination protein rec14 of Schizosaccharomyces pombe (strain 972 / ATCC 24843) (Fission yeast).